Consider the following 186-residue polypeptide: Large ribosomal subunit protein uL22 (186 aa).

Residue S158 is modified to Phosphoserine. A disordered region spans residues 159–186 (KATDDEPAKKKLSKKKLQRQKEKMLRSE). T161 carries the phosphothreonine modification. The segment covering 177-186 (RQKEKMLRSE) has biased composition (basic and acidic residues).

It belongs to the universal ribosomal protein uL22 family.

The sequence is that of Large ribosomal subunit protein uL22 (RpL17) from Drosophila melanogaster (Fruit fly).